Here is a 269-residue protein sequence, read N- to C-terminus: Phosphonoacetaldehyde hydrolase (269 aa).

Asp10 functions as the Nucleophile in the catalytic mechanism. Residues Asp10 and Ala12 each coordinate Mg(2+). Catalysis depends on Lys52, which acts as the Schiff-base intermediate with substrate. Asp186 is a Mg(2+) binding site.

It belongs to the HAD-like hydrolase superfamily. PhnX family. As to quaternary structure, homodimer. Requires Mg(2+) as cofactor.

It catalyses the reaction phosphonoacetaldehyde + H2O = acetaldehyde + phosphate + H(+). Involved in phosphonate degradation. This chain is Phosphonoacetaldehyde hydrolase, found in Salmonella agona (strain SL483).